Here is a 1193-residue protein sequence, read N- to C-terminus: Chloride channel protein 2 (1193 aa).

Topologically, residues 1–168 (MVYFGDRQRD…WIWRHTVARL (168 aa)) are cytoplasmic. Residues 76–97 (SHAFYPCPPPAENARDSDSSDD) form a disordered region. Transmembrane regions (helical) follow at residues 169–204 (GEDWVFLALLGIIMALLSFIMDKGISICTNARIWLY) and 213–236 (VQYIAWVSLPVCLILFSAGFVHLI). A Selectivity filter part_1 motif is present at residues 242–246 (GSGIP). Serine 243 provides a ligand contact to chloride. Positions 245-252 (IPEMKTIL) form an intramembrane region, helical. 2 helical membrane-spanning segments follow: residues 261 to 279 (LTFKTLVAKVIGLTATLGS) and 286 to 304 (EGPFVHIASIVAQLLSKLV). The Selectivity filter part_2 signature appears at 284–288 (GKEGP). 2 consecutive intramembrane regions (helical) follow at residues 320–332 (MLAAACAVGVGAC) and 336–344 (PVGGVLFSI). 5 helical membrane-spanning segments follow: residues 356-373 (YWRGFFAAVCGATVFRLL), 402-430 (LFVFALIGLVCGLGGASYVWVHRRYVLFM), 439-458 (FLQKNRFLYPGFLALLVSSI), 511-530 (FGNLVIYTLFTFVVSIIAST), and 536-555 (GMFIPVFKIGAGFGRLVGEF). Residues 536–540 (GMFIP) carry the Selectivity filter part_3 motif. Phenylalanine 538 lines the chloride pocket. Residues 576 to 590 (GGYAVVGAAAFSGSV) constitute an intramembrane region (helical). An intramembrane region (note=Loop between two helices) is located at residues 591-592 (TH). The helical intramembrane region spans 593 to 604 (TVSVAVIIFEMT). Positions 605–609 (GQITH) form an intramembrane region, note=Loop between two helices. Residues 610–626 (VVPVMIAVLVANAVAAL) form a helical membrane-spanning segment. The Cytoplasmic portion of the chain corresponds to 627–1193 (LQPSIYDSII…KSNTENGNHA (567 aa)). Tyrosine 632 lines the chloride pocket. The region spanning 663–723 (MVRDVKYIWH…KMIEKHIGRE (61 aa)) is the CBS 1 domain. Disordered stretches follow at residues 848-884 (TLQDVQPDPETGSLSPAASNHEVEVPRTPSTPGVSKK), 1103-1122 (NSFVPPTRDEDADEKPAVEK), and 1159-1193 (IKHTDKGTVSLTMPPQESKQSPSADKSNTENGNHA). The region spanning 1048–1105 (IDPSPFQLVERTSILKVHSLFSMVGINHAYVTKIGRLVGVVGLKELRKAIEDINSNSF) is the CBS 2 domain. A compositionally biased stretch (polar residues) spans 1165-1193 (GTVSLTMPPQESKQSPSADKSNTENGNHA).

It belongs to the chloride channel (TC 2.A.49) family. As to expression, at embryonic stages 13-16, expressed in a subset of the midline cells of the midline primordium and in all of the midline glia. Expressed along the Z-line of the sarcomere in larval longitudinal muscles.

Its subcellular location is the membrane. Functionally, voltage-gated chloride channel. Chloride channels have several functions including the regulation of cell volume; membrane potential stabilization, signal transduction and transepithelial transport. The chain is Chloride channel protein 2 (ClC-a) from Drosophila melanogaster (Fruit fly).